Reading from the N-terminus, the 472-residue chain is MAKTYSAGVKEYRETYWMPNYTPKDTDILACFKITPQAGVPREEAAAAVAAESSTGTWTTVWTDLLTDLDYYKGRAYAIEDVPGDDTCFYAFIAYPIDLFEEGSVVNVFTSLVGNVFGFKAVRALRLEDVRFPIAYVMTCNGPPHGIQVERDIMNKYGRPMLGCTIKPKLGLSAKNYGRAVYECLRGGLDFTKDDENVNSQPFMRWRQRFDFVMDAIDKAERETGERKGHYLNVTAPTPEEMYKRAEYAKEIGAPIIMHDYITGGFCANTGLAQWCRDNGVLLHIHRAMHAVLDRNPHHGIHFRVLTKILRLSGGDHLHTGTVVGKLEGDRASTLGWIDLLRESYIKEDRSRGLFFDQDWGSMPGAFAVASGGIHVWHMPALVTIFGDDSVLQFGGGTLGHPWGNAAGACANRVALEACVEARNQGVAIEKEGKDVLTKAAASSPELKIAMETWKEIKFEFDTVDKLDIAHK.

Residues N115 and T165 each contribute to the substrate site. K167 functions as the Proton acceptor in the catalytic mechanism. Substrate is bound at residue K169. Residues K193, D195, and E196 each contribute to the Mg(2+) site. K193 is subject to N6-carboxylysine. H286 serves as the catalytic Proton acceptor. Residues R287, H319, and S371 each contribute to the substrate site.

It belongs to the RuBisCO large chain family. Type I subfamily. As to quaternary structure, heterohexadecamer of 8 large chains and 8 small chains. The cofactor is Mg(2+).

It carries out the reaction 2 (2R)-3-phosphoglycerate + 2 H(+) = D-ribulose 1,5-bisphosphate + CO2 + H2O. It catalyses the reaction D-ribulose 1,5-bisphosphate + O2 = 2-phosphoglycolate + (2R)-3-phosphoglycerate + 2 H(+). RuBisCO catalyzes two reactions: the carboxylation of D-ribulose 1,5-bisphosphate, the primary event in carbon dioxide fixation, as well as the oxidative fragmentation of the pentose substrate. Both reactions occur simultaneously and in competition at the same active site. The sequence is that of Ribulose bisphosphate carboxylase large chain 1 from Allochromatium vinosum (strain ATCC 17899 / DSM 180 / NBRC 103801 / NCIMB 10441 / D) (Chromatium vinosum).